The following is a 238-amino-acid chain: ATP synthase subunit a (238 aa).

Transmembrane regions (helical) follow at residues 18-38 (TTNL…VFAL), 76-96 (FGLY…IGLF), 114-134 (PIVT…SGVA), 150-170 (FKVW…TLGL), 188-208 (GIAF…ALIW), and 211-231 (FSVF…SVYI).

The protein belongs to the ATPase A chain family. In terms of assembly, F-type ATPases have 2 components, CF(1) - the catalytic core - and CF(0) - the membrane proton channel. CF(1) has five subunits: alpha(3), beta(3), gamma(1), delta(1), epsilon(1). CF(0) has three main subunits: a(1), b(2) and c(9-12). The alpha and beta chains form an alternating ring which encloses part of the gamma chain. CF(1) is attached to CF(0) by a central stalk formed by the gamma and epsilon chains, while a peripheral stalk is formed by the delta and b chains.

It localises to the cell membrane. Key component of the proton channel; it plays a direct role in the translocation of protons across the membrane. The polypeptide is ATP synthase subunit a (Pediococcus pentosaceus (strain ATCC 25745 / CCUG 21536 / LMG 10740 / 183-1w)).